Here is a 38-residue protein sequence, read N- to C-terminus: Large ribosomal subunit protein bL36 (38 aa).

Belongs to the bacterial ribosomal protein bL36 family.

This chain is Large ribosomal subunit protein bL36, found in Synechococcus sp. (strain JA-2-3B'a(2-13)) (Cyanobacteria bacterium Yellowstone B-Prime).